The following is a 511-amino-acid chain: UDP-N-acetylhexosamine pyrophosphorylase-like protein 1 (511 aa).

Positions 1-19 (MDRSESAESAESRRRRAEE) are enriched in basic and acidic residues. A disordered region spans residues 1–22 (MDRSESAESAESRRRRAEESGQ). A Substrate binding motif is present at residues 117–120 (LAGG). UTP-binding positions include 117–120 (LAGG), K131, Q205, and G231. N232 contributes to the substrate binding site. D262 provides a ligand contact to UTP. The short motif at 312-313 (EY) is the Substrate binding element. K386 is a UTP binding site. Substrate is bound at residue K416.

Belongs to the UDPGP type 1 family.

This Xenopus tropicalis (Western clawed frog) protein is UDP-N-acetylhexosamine pyrophosphorylase-like protein 1 (uap1l1).